Consider the following 592-residue polypeptide: Arginine--tRNA ligase (592 aa).

A 'HIGH' region motif is present at residues 129-139 (ANPTGPLHVGH).

The protein belongs to the class-I aminoacyl-tRNA synthetase family. As to quaternary structure, monomer.

The protein resides in the cytoplasm. It catalyses the reaction tRNA(Arg) + L-arginine + ATP = L-arginyl-tRNA(Arg) + AMP + diphosphate. The protein is Arginine--tRNA ligase of Dichelobacter nodosus (strain VCS1703A).